A 306-amino-acid chain; its full sequence is Oligopeptide transport system permease protein OppB (306 aa).

Over 1-12 the chain is Cytoplasmic; sequence MLKFILRRCLEA. The helical transmembrane segment at 13–30 threads the bilayer; it reads IPTLFILITISFFMMRLA. Residues 31 to 101 lie on the Periplasmic side of the membrane; sequence PGSPFTGERA…ASFPVSAKLG (71 aa). In terms of domain architecture, ABC transmembrane type-1 spans 94 to 293; sequence FPVSAKLGAA…ALTILFNAIV (200 aa). Residues 102-121 form a helical membrane-spanning segment; it reads AAAFLLAVIIGVSAGVIAAL. Residues 122–133 are Cytoplasmic-facing; sequence KQNTRWDYTVMG. The helical transmembrane segment at 134–156 threads the bilayer; the sequence is FAMTGVVIPSFVVAPLLVMVFAI. The Periplasmic segment spans residues 157-165; the sequence is TLQWLPGGG. Residues 166–188 traverse the membrane as a helical segment; sequence WNGGALKFMILPMVALSLAYIAS. The Cytoplasmic portion of the chain corresponds to 189–227; it reads IARITRGSMIEVLHSNFIRTARAKGLPMRRIIFRHALKP. Residues 228–250 traverse the membrane as a helical segment; sequence ALLPVLSYMGPAFVGIITGSMVI. At 251-277 the chain is on the periplasmic side; that stretch reads ETIYGLPGIGQLFVNGALNRDYSLVLS. Residues 278–300 form a helical membrane-spanning segment; it reads LTILVGALTILFNAIVDVLYAVI. At 301 to 306 the chain is on the cytoplasmic side; sequence DPKIRY.

The protein belongs to the binding-protein-dependent transport system permease family. OppBC subfamily. The complex is composed of two ATP-binding proteins (OppD and OppF), two transmembrane proteins (OppB and OppC) and a solute-binding protein (OppA).

It localises to the cell inner membrane. Functionally, part of the ABC transporter complex OppABCDF involved in the uptake of oligopeptides, including the cell wall murein tripeptide L-alanyl-gamma-D-glutamyl-meso-diaminopimelate. Responsible for the translocation of the substrate across the membrane. Plays an important nutritional role and is involved in the recycling of cell wall peptides. This Salmonella typhimurium (strain LT2 / SGSC1412 / ATCC 700720) protein is Oligopeptide transport system permease protein OppB.